Here is a 330-residue protein sequence, read N- to C-terminus: Aspartate--ammonia ligase (330 aa).

This sequence belongs to the class-II aminoacyl-tRNA synthetase family. AsnA subfamily.

The protein localises to the cytoplasm. The enzyme catalyses L-aspartate + NH4(+) + ATP = L-asparagine + AMP + diphosphate + H(+). The protein operates within amino-acid biosynthesis; L-asparagine biosynthesis; L-asparagine from L-aspartate (ammonia route): step 1/1. This chain is Aspartate--ammonia ligase, found in Yersinia enterocolitica serotype O:8 / biotype 1B (strain NCTC 13174 / 8081).